A 463-amino-acid chain; its full sequence is Adenosylhomocysteinase (463 aa).

The substrate site is built by Thr-54, Asp-128, and Glu-189. Thr-190–Thr-192 serves as a coordination point for NAD(+). Residues Lys-219 and Asp-223 each contribute to the substrate site. NAD(+) contacts are provided by residues Asn-224, Gly-253–Gly-258, Glu-276, Asn-311, Ile-332–His-334, and Asn-377.

This sequence belongs to the adenosylhomocysteinase family. NAD(+) is required as a cofactor.

It is found in the cytoplasm. It catalyses the reaction S-adenosyl-L-homocysteine + H2O = L-homocysteine + adenosine. Its pathway is amino-acid biosynthesis; L-homocysteine biosynthesis; L-homocysteine from S-adenosyl-L-homocysteine: step 1/1. Its function is as follows. May play a key role in the regulation of the intracellular concentration of adenosylhomocysteine. The sequence is that of Adenosylhomocysteinase from Cereibacter sphaeroides (Rhodobacter sphaeroides).